A 37-amino-acid polypeptide reads, in one-letter code: Protein YnaM (37 aa).

A helical membrane pass occupies residues 4 to 24 (ILIITSLLIIFSIFSHALIKL).

The protein resides in the cell inner membrane. This is Protein YnaM from Escherichia coli (strain K12).